The sequence spans 399 residues: Phosphoglycerate kinase (399 aa).

Residues aspartate 22–asparagine 24, arginine 38, histidine 61–arginine 64, arginine 120, and arginine 153 each bind substrate. ATP is bound by residues lysine 204, glutamate 326, and glycine 352–threonine 355.

It belongs to the phosphoglycerate kinase family. As to quaternary structure, monomer.

It is found in the cytoplasm. The catalysed reaction is (2R)-3-phosphoglycerate + ATP = (2R)-3-phospho-glyceroyl phosphate + ADP. It functions in the pathway carbohydrate degradation; glycolysis; pyruvate from D-glyceraldehyde 3-phosphate: step 2/5. In Pelobacter propionicus (strain DSM 2379 / NBRC 103807 / OttBd1), this protein is Phosphoglycerate kinase.